The chain runs to 144 residues: Giant hemoglobins B chain (144 aa).

The Globin domain occupies 3–144; that stretch reads VCGPLQRLKV…LNVITNGIQG (142 aa). His-96 is a heme b binding site.

Belongs to the globin family. As to quaternary structure, part of giant hemoglobin C1, V1 and V2. This worm has three different extracellular Hbs: two dissolved in the vascular blood, V1 (CA. 3,500 kDa) and V2 (CA. 400 kDa), and one in the coelomic fluid, C1 (CA. 400 kDa). V1 consists of four heme-containing, globin chains (B-E) and four linker chains (L1-L4). V2 consists of six globin chains (A-F) and C1 consists of five globin chains (A-E).

The protein localises to the secreted. Its subcellular location is the extracellular space. The protein is Giant hemoglobins B chain of Riftia pachyptila (Vent tube worm).